The sequence spans 74 residues: Small ribosomal subunit protein eS17 (74 aa).

It belongs to the eukaryotic ribosomal protein eS17 family.

This Ignicoccus hospitalis (strain KIN4/I / DSM 18386 / JCM 14125) protein is Small ribosomal subunit protein eS17.